We begin with the raw amino-acid sequence, 178 residues long: CDP-diacylglycerol--glycerol-3-phosphate 3-phosphatidyltransferase (178 aa).

4 helical membrane passes run 28–48 (LSSL…GFFA), 88–108 (LIFF…IFLI), 125–145 (LFVS…VNFL), and 147–167 (ILTN…WVDY).

It belongs to the CDP-alcohol phosphatidyltransferase class-I family.

It localises to the cell membrane. The enzyme catalyses a CDP-1,2-diacyl-sn-glycerol + sn-glycerol 3-phosphate = a 1,2-diacyl-sn-glycero-3-phospho-(1'-sn-glycero-3'-phosphate) + CMP + H(+). It participates in phospholipid metabolism; phosphatidylglycerol biosynthesis; phosphatidylglycerol from CDP-diacylglycerol: step 1/2. In terms of biological role, this protein catalyzes the committed step to the synthesis of the acidic phospholipids. The polypeptide is CDP-diacylglycerol--glycerol-3-phosphate 3-phosphatidyltransferase (pgsA) (Aquifex aeolicus (strain VF5)).